A 155-amino-acid chain; its full sequence is UPF0461 protein C5orf24 homolog (155 aa).

Positions 1-10 (MMHPVASSNP) are enriched in polar residues. The tract at residues 1–20 (MMHPVASSNPAFCGPGKPSC) is disordered. S37 is modified (phosphoserine). The tract at residues 40–155 (SKYSHTVNHK…QQAFRCSSDA (116 aa)) is disordered. Residues 57–70 (DPLNETHLQTTSGR) are compositionally biased toward polar residues. K75 is covalently cross-linked (Glycyl lysine isopeptide (Lys-Gly) (interchain with G-Cter in SUMO2)). Over residues 80 to 92 (KKKNLNRSGKRGR) the composition is skewed to basic residues. Polar residues predominate over residues 94–107 (SGTTKSAGYRTSTG). S121 carries the phosphoserine modification.

Belongs to the UPF0461 family.

The polypeptide is UPF0461 protein C5orf24 homolog (Pongo abelii (Sumatran orangutan)).